The following is a 457-amino-acid chain: Multidrug resistance protein MdtK (457 aa).

A run of 12 helical transmembrane segments spans residues Leu11–Val31, Ile53–Ala73, Trp93–Ile113, Ala127–Ala147, Gly160–Tyr180, Gly189–Val209, Leu243–Val263, Ile276–Thr296, Ala314–Val334, Val350–Ile370, Ile387–Ala407, and Pro418–Leu438.

It belongs to the multi antimicrobial extrusion (MATE) (TC 2.A.66.1) family. MdtK subfamily.

The protein resides in the cell inner membrane. Multidrug efflux pump that functions probably as a Na(+)/drug antiporter. The polypeptide is Multidrug resistance protein MdtK (Escherichia coli O139:H28 (strain E24377A / ETEC)).